The sequence spans 273 residues: Dermonecrotic toxin LhSicTox-alphaIA2biv (273 aa).

The active site involves H5. 2 residues coordinate Mg(2+): E25 and D27. The active-site Nucleophile is H41. 2 cysteine pairs are disulfide-bonded: C45–C51 and C47–C190. D85 serves as a coordination point for Mg(2+).

It belongs to the arthropod phospholipase D family. Class II subfamily. Mg(2+) is required as a cofactor. In terms of tissue distribution, expressed by the venom gland.

The protein resides in the secreted. It catalyses the reaction an N-(acyl)-sphingosylphosphocholine = an N-(acyl)-sphingosyl-1,3-cyclic phosphate + choline. It carries out the reaction an N-(acyl)-sphingosylphosphoethanolamine = an N-(acyl)-sphingosyl-1,3-cyclic phosphate + ethanolamine. The enzyme catalyses a 1-acyl-sn-glycero-3-phosphocholine = a 1-acyl-sn-glycero-2,3-cyclic phosphate + choline. The catalysed reaction is a 1-acyl-sn-glycero-3-phosphoethanolamine = a 1-acyl-sn-glycero-2,3-cyclic phosphate + ethanolamine. Functionally, dermonecrotic toxins cleave the phosphodiester linkage between the phosphate and headgroup of certain phospholipids (sphingolipid and lysolipid substrates), forming an alcohol (often choline) and a cyclic phosphate. This toxin acts on sphingomyelin (SM). It may also act on ceramide phosphoethanolamine (CPE), lysophosphatidylcholine (LPC) and lysophosphatidylethanolamine (LPE), but not on lysophosphatidylserine (LPS), and lysophosphatidylglycerol (LPG). It acts by transphosphatidylation, releasing exclusively cyclic phosphate products as second products. Induces dermonecrosis, hemolysis, increased vascular permeability, edema, inflammatory response, and platelet aggregation. The chain is Dermonecrotic toxin LhSicTox-alphaIA2biv from Loxosceles hirsuta (Recluse spider).